A 451-amino-acid chain; its full sequence is Signal recognition particle 54 kDa protein (451 aa).

Residues 105–112 (GVQGTGKT), 187–191 (DTAGR), and 247–250 (TKMD) contribute to the GTP site.

This sequence belongs to the GTP-binding SRP family. SRP54 subfamily. As to quaternary structure, part of the signal recognition particle protein translocation system, which is composed of SRP and FtsY. Archaeal SRP consists of a 7S RNA molecule of 300 nucleotides and two protein subunits: SRP54 and SRP19.

Its subcellular location is the cytoplasm. It catalyses the reaction GTP + H2O = GDP + phosphate + H(+). Involved in targeting and insertion of nascent membrane proteins into the cytoplasmic membrane. Binds to the hydrophobic signal sequence of the ribosome-nascent chain (RNC) as it emerges from the ribosomes. The SRP-RNC complex is then targeted to the cytoplasmic membrane where it interacts with the SRP receptor FtsY. In Acidianus ambivalens (Desulfurolobus ambivalens), this protein is Signal recognition particle 54 kDa protein.